We begin with the raw amino-acid sequence, 494 residues long: Aspartyl/glutamyl-tRNA(Asn/Gln) amidotransferase subunit B (494 aa).

This sequence belongs to the GatB/GatE family. GatB subfamily. As to quaternary structure, heterotrimer of A, B and C subunits.

The enzyme catalyses L-glutamyl-tRNA(Gln) + L-glutamine + ATP + H2O = L-glutaminyl-tRNA(Gln) + L-glutamate + ADP + phosphate + H(+). It catalyses the reaction L-aspartyl-tRNA(Asn) + L-glutamine + ATP + H2O = L-asparaginyl-tRNA(Asn) + L-glutamate + ADP + phosphate + 2 H(+). In terms of biological role, allows the formation of correctly charged Asn-tRNA(Asn) or Gln-tRNA(Gln) through the transamidation of misacylated Asp-tRNA(Asn) or Glu-tRNA(Gln) in organisms which lack either or both of asparaginyl-tRNA or glutaminyl-tRNA synthetases. The reaction takes place in the presence of glutamine and ATP through an activated phospho-Asp-tRNA(Asn) or phospho-Glu-tRNA(Gln). The sequence is that of Aspartyl/glutamyl-tRNA(Asn/Gln) amidotransferase subunit B from Trichodesmium erythraeum (strain IMS101).